Consider the following 220-residue polypeptide: Phosphopantothenoylcysteine decarboxylase (220 aa).

Residues 29–31 (GSV) and 54–56 (TKA) contribute to the FMN site. His-91 serves as the catalytic Proton donor. FMN is bound by residues 107-110 (SANT) and Ala-141. Residues Asn-143, Arg-173, and Ala-175 each coordinate N-[(R)-4-phosphopantothenoyl]-L-cysteine. The active-site Proton donor is Cys-176. An N-[(R)-4-phosphopantothenoyl]-L-cysteine-binding site is contributed by Met-184.

Belongs to the HFCD (homooligomeric flavin containing Cys decarboxylase) superfamily. Forms homotrimers. Interacts with HIP1. Interacts with HD1 in the dark. Requires FMN as cofactor. In terms of tissue distribution, expressed in root meristem, shoot apical meristem (SAM), intercalary meristem, floral meristem, embryo and tip of the coleoptile before true leaf emergence.

It is found in the nucleus. The enzyme catalyses N-[(R)-4-phosphopantothenoyl]-L-cysteine + H(+) = (R)-4'-phosphopantetheine + CO2. It functions in the pathway cofactor biosynthesis; coenzyme A biosynthesis; CoA from (R)-pantothenate: step 3/5. Catalyzes the decarboxylation of 4'-phosphopantothenoylcysteine to 4'-phosphopantetheine, a key step in coenzyme A biosynthesis. Involved in salt and osmotic tolerance, and light-regulated plant growth. Trimerization of HAL3 recruits and activates the E3 ubiquitin-protein ligase HIP1, which leads to the degradation of cell cycle suppressors, resulting in enhancement of cell division and plant growth. HAL3 function in cell division seems to be independent from its PPC decarboxylase activity. Acts as a positive regulator of flowering by binding to HD1 in the dark. In Oryza sativa subsp. japonica (Rice), this protein is Phosphopantothenoylcysteine decarboxylase.